We begin with the raw amino-acid sequence, 251 residues long: Triosephosphate isomerase (251 aa).

9–11 (NWK) is a substrate binding site. Catalysis depends on H95, which acts as the Electrophile. E167 functions as the Proton acceptor in the catalytic mechanism. Substrate is bound by residues G173, S213, and 234-235 (GG).

Belongs to the triosephosphate isomerase family. In terms of assembly, homodimer.

The protein localises to the cytoplasm. The enzyme catalyses D-glyceraldehyde 3-phosphate = dihydroxyacetone phosphate. It functions in the pathway carbohydrate biosynthesis; gluconeogenesis. Its pathway is carbohydrate degradation; glycolysis; D-glyceraldehyde 3-phosphate from glycerone phosphate: step 1/1. Involved in the gluconeogenesis. Catalyzes stereospecifically the conversion of dihydroxyacetone phosphate (DHAP) to D-glyceraldehyde-3-phosphate (G3P). This is Triosephosphate isomerase from Pediococcus pentosaceus (strain ATCC 25745 / CCUG 21536 / LMG 10740 / 183-1w).